A 281-amino-acid chain; its full sequence is 2,3,4,5-tetrahydropyridine-2,6-dicarboxylate N-succinyltransferase (281 aa).

Residues R108 and D145 each coordinate substrate.

It belongs to the transferase hexapeptide repeat family. Homotrimer.

The protein resides in the cytoplasm. The enzyme catalyses (S)-2,3,4,5-tetrahydrodipicolinate + succinyl-CoA + H2O = (S)-2-succinylamino-6-oxoheptanedioate + CoA. Its pathway is amino-acid biosynthesis; L-lysine biosynthesis via DAP pathway; LL-2,6-diaminopimelate from (S)-tetrahydrodipicolinate (succinylase route): step 1/3. This is 2,3,4,5-tetrahydropyridine-2,6-dicarboxylate N-succinyltransferase from Rhodopseudomonas palustris (strain BisA53).